We begin with the raw amino-acid sequence, 200 residues long: Probable molybdenum cofactor guanylyltransferase (200 aa).

Residues 9–11 (LAG), Lys-21, Asp-69, and Asp-100 contribute to the GTP site. Residue Asp-100 coordinates Mg(2+).

It belongs to the MobA family. The cofactor is Mg(2+).

The protein resides in the cytoplasm. The enzyme catalyses Mo-molybdopterin + GTP + H(+) = Mo-molybdopterin guanine dinucleotide + diphosphate. Functionally, transfers a GMP moiety from GTP to Mo-molybdopterin (Mo-MPT) cofactor (Moco or molybdenum cofactor) to form Mo-molybdopterin guanine dinucleotide (Mo-MGD) cofactor. This Bacillus cereus (strain ATCC 10987 / NRS 248) protein is Probable molybdenum cofactor guanylyltransferase.